The sequence spans 398 residues: ATP-dependent RNA helicase RhlB (398 aa).

The Q motif motif lies at 9–37 (TRFHDFKLSNELMHAIHDLGFPYCTPIQA). The region spanning 40-220 (LGYTLRGQDA…KQWTTNPAIV (181 aa)) is the Helicase ATP-binding domain. Residue 53 to 60 (AQTGTGKT) coordinates ATP. The DEAD box motif lies at 166-169 (DEAD). A Helicase C-terminal domain is found at 243–393 (DKYKLLYNLV…MPPDELLKPV (151 aa)).

This sequence belongs to the DEAD box helicase family. RhlB subfamily. Component of the RNA degradosome, which is a multiprotein complex involved in RNA processing and mRNA degradation.

It is found in the cytoplasm. The enzyme catalyses ATP + H2O = ADP + phosphate + H(+). Functionally, DEAD-box RNA helicase involved in RNA degradation. Has RNA-dependent ATPase activity and unwinds double-stranded RNA. The chain is ATP-dependent RNA helicase RhlB from Pseudomonas putida (strain ATCC 47054 / DSM 6125 / CFBP 8728 / NCIMB 11950 / KT2440).